Reading from the N-terminus, the 81-residue chain is MMNVITVVGIILSVVCTISDAEGVDCTLPSDTGRCKAYFIRYFYNQKAGECQKFVYGGCEGNSNNFLTKSDCCKQCSPGKC.

The signal sequence occupies residues 1 to 21 (MMNVITVVGIILSVVCTISDA). Residues 26 to 76 (CTLPSDTGRCKAYFIRYFYNQKAGECQKFVYGGCEGNSNNFLTKSDCCKQC) enclose the BPTI/Kunitz inhibitor domain. Disulfide bonds link Cys26–Cys76, Cys35–Cys59, Cys51–Cys72, and Cys73–Cys81.

This sequence belongs to the venom Kunitz-type family. Scorpion delta-Ktx subfamily. Delta-Ktx 3 sub-subfamily. Expressed by the venom gland.

It localises to the secreted. Its function is as follows. Multifunctional toxin which inhibits serine proteases and potassium channels. Potently inhibits plasmin (Ki=8.75 nM), trypsin, chymotrypsin and elastase. Also inhibits mKv1.3/KCNA3 potassium channel currents (IC(50)=371.3 nM). This Olivierus martensii (Manchurian scorpion) protein is Kunitz-type serine protease inhibitor BmKTT-2.